Reading from the N-terminus, the 706-residue chain is Polyribonucleotide nucleotidyltransferase (706 aa).

Mg(2+)-binding residues include aspartate 486 and aspartate 492. One can recognise a KH domain in the interval proline 553–isoleucine 612. One can recognise an S1 motif domain in the interval glycine 622–lysine 690.

The protein belongs to the polyribonucleotide nucleotidyltransferase family. In terms of assembly, component of the RNA degradosome, which is a multiprotein complex involved in RNA processing and mRNA degradation. Mg(2+) serves as cofactor.

It localises to the cytoplasm. The enzyme catalyses RNA(n+1) + phosphate = RNA(n) + a ribonucleoside 5'-diphosphate. Its function is as follows. Involved in mRNA degradation. Catalyzes the phosphorolysis of single-stranded polyribonucleotides processively in the 3'- to 5'-direction. This Pectobacterium atrosepticum (strain SCRI 1043 / ATCC BAA-672) (Erwinia carotovora subsp. atroseptica) protein is Polyribonucleotide nucleotidyltransferase.